Reading from the N-terminus, the 905-residue chain is Protein translocase subunit SecA (905 aa).

ATP is bound by residues glutamine 89, 107 to 111 (GEGKT), and aspartate 502. Positions 837–885 (EQTDVGDPILNDQNKKNSSTLWTPSQENKFVNPKDRNPSDSTTWGKVGR) are disordered. Residues 852-865 (KNSSTLWTPSQENK) show a composition bias toward polar residues. Zn(2+)-binding residues include cysteine 889, cysteine 891, cysteine 900, and histidine 901.

It belongs to the SecA family. In terms of assembly, monomer and homodimer. Part of the essential Sec protein translocation apparatus which comprises SecA, SecYEG and auxiliary proteins SecDF-YajC and YidC. The cofactor is Zn(2+).

It localises to the cell inner membrane. The protein resides in the cytoplasm. The catalysed reaction is ATP + H2O + cellular proteinSide 1 = ADP + phosphate + cellular proteinSide 2.. Functionally, part of the Sec protein translocase complex. Interacts with the SecYEG preprotein conducting channel. Has a central role in coupling the hydrolysis of ATP to the transfer of proteins into and across the cell membrane, serving both as a receptor for the preprotein-SecB complex and as an ATP-driven molecular motor driving the stepwise translocation of polypeptide chains across the membrane. In Bartonella henselae (strain ATCC 49882 / DSM 28221 / CCUG 30454 / Houston 1) (Rochalimaea henselae), this protein is Protein translocase subunit SecA.